A 480-amino-acid chain; its full sequence is Protein disulfide-isomerase 5-4 (480 aa).

2 N-linked (GlcNAc...) asparagine glycosylation sites follow: Asn74 and Asn99. Residues Phe120–Glu263 enclose the Thioredoxin domain. Catalysis depends on nucleophile residues Cys170 and Cys173. A disulfide bridge links Cys170 with Cys173. Residues Asn280, Asn326, and Asn376 are each glycosylated (N-linked (GlcNAc...) asparagine). The chain crosses the membrane as a helical span at residues Phe439–Ile459.

It belongs to the protein disulfide isomerase family. Widely expressed.

The protein resides in the membrane. In terms of biological role, acts as a protein-folding catalyst that interacts with nascent polypeptides to catalyze the formation, isomerization, and reduction or oxidation of disulfide bonds. The sequence is that of Protein disulfide-isomerase 5-4 (PDIL5-4) from Arabidopsis thaliana (Mouse-ear cress).